A 334-amino-acid polypeptide reads, in one-letter code: Homoserine O-acetyltransferase (334 aa).

One can recognise an AB hydrolase-1 domain in the interval 61-318 (LVLHALTGDS…GSIHGHDAFL (258 aa)). Residue Ser148 is the Nucleophile of the active site. Arg205 serves as a coordination point for substrate. Active-site residues include Asp285 and His314. Asp315 contacts substrate.

This sequence belongs to the AB hydrolase superfamily. MetX family. As to quaternary structure, homodimer.

It localises to the cytoplasm. It carries out the reaction L-homoserine + acetyl-CoA = O-acetyl-L-homoserine + CoA. The protein operates within amino-acid biosynthesis; L-methionine biosynthesis via de novo pathway; O-acetyl-L-homoserine from L-homoserine: step 1/1. Transfers an acetyl group from acetyl-CoA to L-homoserine, forming acetyl-L-homoserine. This Deinococcus radiodurans (strain ATCC 13939 / DSM 20539 / JCM 16871 / CCUG 27074 / LMG 4051 / NBRC 15346 / NCIMB 9279 / VKM B-1422 / R1) protein is Homoserine O-acetyltransferase.